The chain runs to 121 residues: NLFQFRKMIKKMTKKEPVVYYAFYGCYCGKGGRGKPKDATDRCCFVHDCCYEKVTGCNPKWGYYTYSMNKQIVCGGDDPCKKQVCECDKAAAICFRDNLKTYKKKYMSFPNFFCTDPSEKC.

Intrachain disulfides connect cysteine 26-cysteine 114, cysteine 28-cysteine 44, cysteine 43-cysteine 94, cysteine 49-cysteine 121, cysteine 50-cysteine 87, cysteine 57-cysteine 80, and cysteine 74-cysteine 85. Ca(2+)-binding residues include tyrosine 27, glycine 29, and glycine 31. Residue histidine 47 is part of the active site. Aspartate 48 contributes to the Ca(2+) binding site. Aspartate 88 is a catalytic residue.

In terms of assembly, homopentamer. Requires Ca(2+) as cofactor. As to expression, expressed by the venom gland.

It is found in the secreted. It catalyses the reaction a 1,2-diacyl-sn-glycero-3-phosphocholine + H2O = a 1-acyl-sn-glycero-3-phosphocholine + a fatty acid + H(+). Functionally, snake venom phospholipase A2 (PLA2) that displays moderate myotoxic activity in vivo, and cytotoxic activity in vitro. In vitro, shows anticoagulant activity on human plasma and in mice causes inflammatory cell infiltration and myonecrosis in the gastrocnemius muscles of CD-1 mice 3 hours after injection (100 ug). PLA2 catalyzes the calcium-dependent hydrolysis of the 2-acyl groups in 3-sn-phosphoglycerides. In Porthidium ophryomegas (Slender hognose viper), this protein is Basic phospholipase A2.